Here is a 225-residue protein sequence, read N- to C-terminus: UPF0502 protein Ajs_3392 (225 aa).

The protein belongs to the UPF0502 family.

In Acidovorax sp. (strain JS42), this protein is UPF0502 protein Ajs_3392.